The chain runs to 184 residues: Translocon-associated protein subunit beta (184 aa).

The N-terminal stretch at 1–20 (MNFKTVISLFLVLFVSFVYC) is a signal peptide. Topologically, residues 21-147 (ENGAELLFHK…SQADYEKRTS (127 aa)) are lumenal. N94 carries an N-linked (GlcNAc...) asparagine glycan. The helical transmembrane segment at 148–168 (LLIKEWITFFVLCAGAIALPY) threads the bilayer. At 169-184 (SISTYYKKNYENGIKK) the chain is on the cytoplasmic side.

Belongs to the TRAP-beta family. Heterotrimer of TRAP-alpha, TRAP-beta and TRAP-gamma.

The protein resides in the endoplasmic reticulum membrane. In terms of biological role, TRAP proteins are part of a complex whose function is to bind calcium to the ER membrane and thereby regulate the retention of ER resident proteins. The protein is Translocon-associated protein subunit beta (ssr2) of Dictyostelium discoideum (Social amoeba).